The sequence spans 147 residues: NADPH-dependent 7-cyano-7-deazaguanine reductase (147 aa).

Residues 1–23 (MQTTHLGKNSPIPQSPEEASLDY) are disordered. Residue C46 is the Thioimide intermediate of the active site. The active-site Proton donor is the D53. Residues 68-70 (VES) and 87-88 (HE) each bind substrate.

The protein belongs to the GTP cyclohydrolase I family. QueF type 1 subfamily.

The protein localises to the cytoplasm. The catalysed reaction is 7-aminomethyl-7-carbaguanine + 2 NADP(+) = 7-cyano-7-deazaguanine + 2 NADPH + 3 H(+). It functions in the pathway tRNA modification; tRNA-queuosine biosynthesis. In terms of biological role, catalyzes the NADPH-dependent reduction of 7-cyano-7-deazaguanine (preQ0) to 7-aminomethyl-7-deazaguanine (preQ1). This is NADPH-dependent 7-cyano-7-deazaguanine reductase from Zymomonas mobilis subsp. mobilis (strain ATCC 31821 / ZM4 / CP4).